Consider the following 884-residue polypeptide: Probable mixed-linked glucan synthase 9 (884 aa).

Residues 1-27 show a composition bias toward low complexity; the sequence is MALSPAAAGRTGRNNNNDAGLADPLLP. The disordered stretch occupies residues 1 to 34; that stretch reads MALSPAAAGRTGRNNNNDAGLADPLLPAGGGGGG. The next 2 helical transmembrane spans lie at 73–93 and 104–124; these read VLLH…VLFL and AMWL…TWLL. Residue Asp-195 is part of the active site. Asp-396 and Asp-398 together coordinate substrate. Asp-565 is a catalytic residue. 6 helical membrane passes run 640-660, 672-692, 708-728, 765-785, 802-822, and 830-850; these read TAYP…VIWL, FSTY…IGLV, EQFY…HIVL, LLAP…AAAG, AGLV…LGIM, and CALF…FVAV.

The protein belongs to the glycosyltransferase 2 family. Plant cellulose synthase-like F subfamily.

It localises to the golgi apparatus membrane. Its function is as follows. May catalyze both beta-1,3 and beta-1,4 glycosidic linkage on beta-D-glucan. Essential for (1,3;1,4)-beta-D-glucans synthesis in grasses and cereals (Poaceae). The mixed-linked glucans (which are not present in walls of dicotyledons or most other monocotyledonous plants) are particularly important constituents of the walls of the starchy endosperm and aleurone cells of cereal grains such as oats, wheat, rice and barley. They can account for up to 70% by weight of the wall. This Oryza sativa subsp. japonica (Rice) protein is Probable mixed-linked glucan synthase 9 (CSLF9).